The chain runs to 528 residues: MTSLLAAEVAKRRTFAIISHPDAGKTTITEKVLLFGQAIQTAGTVKGRGSNQHAKSDWMEMEKQRGISITTSVMQFPYHDCLVNLLDTPGHEDFSEDTYRTLTAVDCCLMVIDAAKGVEDRTRKLMEVTRLRDTPILTFMNKLDRDIRDPMELLDEVENELKIGCAPITWPIGCGKLFKGVYHLYKDETYLYQSGKGHTIQEVRIVKGLNNPDLDAAVGEDLAQQLRDELELVKGASNEFDKELFLAGEITPVFFGTALGNFGVDHMLDGLVEWAPAPMPRQTDTRTVEASEDKFTGFVFKIQANMDPKHRDRVAFMRVVSGKYEKGMKLRQVRTAKDVVISDALTFMAGDRSHVEEAYPGDILGLHNHGTIQIGDTFTQGEMMKFTGIPNFAPELFRRIRLKDPLKQKQLLKGLVQLSEEGAVQVFRPISNNDLIVGAVGVLQFDVVVARLKSEYNVEAVYESVNVATARWVECADAKKFEEFKRKNESQLALDGGDNLAYIATSMVNLRLAQERYPDVQFHQTREH.

One can recognise a tr-type G domain in the interval Ala-10–Met-279. GTP is bound by residues Ser-19–Thr-26, Asp-87–His-91, and Asn-141–Asp-144.

This sequence belongs to the TRAFAC class translation factor GTPase superfamily. Classic translation factor GTPase family. PrfC subfamily.

The protein resides in the cytoplasm. In terms of biological role, increases the formation of ribosomal termination complexes and stimulates activities of RF-1 and RF-2. It binds guanine nucleotides and has strong preference for UGA stop codons. It may interact directly with the ribosome. The stimulation of RF-1 and RF-2 is significantly reduced by GTP and GDP, but not by GMP. The protein is Peptide chain release factor 3 of Escherichia coli O1:K1 / APEC.